A 148-amino-acid polypeptide reads, in one-letter code: Lysozyme C (148 aa).

The signal sequence occupies residues 1 to 18; sequence MRALIILGLVLLSVTVQG. The region spanning 19-148 is the C-type lysozyme domain; that stretch reads KIFERCELAR…VSQYVKGCGV (130 aa). Disulfide bonds link cysteine 24–cysteine 146, cysteine 48–cysteine 134, cysteine 83–cysteine 99, and cysteine 95–cysteine 113. Residues glutamate 53 and aspartate 71 contribute to the active site.

Belongs to the glycosyl hydrolase 22 family. In terms of assembly, monomer.

The protein localises to the secreted. The enzyme catalyses Hydrolysis of (1-&gt;4)-beta-linkages between N-acetylmuramic acid and N-acetyl-D-glucosamine residues in a peptidoglycan and between N-acetyl-D-glucosamine residues in chitodextrins.. Lysozymes have primarily a bacteriolytic function; those in tissues and body fluids are associated with the monocyte-macrophage system and enhance the activity of immunoagents. Also plays a role in digestion in this species. The sequence is that of Lysozyme C (LYZ) from Trachypithecus francoisi (Francois' leaf monkey).